A 349-amino-acid polypeptide reads, in one-letter code: Heat-inducible transcription repressor HrcA (349 aa).

Belongs to the HrcA family.

Its function is as follows. Negative regulator of class I heat shock genes (grpE-dnaK-dnaJ and groELS operons). Prevents heat-shock induction of these operons. The protein is Heat-inducible transcription repressor HrcA of Mycoplasmoides gallisepticum (strain R(low / passage 15 / clone 2)) (Mycoplasma gallisepticum).